We begin with the raw amino-acid sequence, 404 residues long: Probable mannosyltransferase KTR3 (404 aa).

Over 1–27 (MSVHHKKKLMPKSALLIRKYQKGIRSS) the chain is Cytoplasmic. A helical; Signal-anchor for type II membrane protein membrane pass occupies residues 28 to 44 (FIGLIIVLSFLFFMSGS). Residues 45–83 (RSPEVPIAQGTSVSRVASKDYLMPFTDKSQGVIHPVDDG) are stem region. At 45–404 (RSPEVPIAQG…AGNYKLPPGI (360 aa)) the chain is on the lumenal side. The catalytic stretch occupies residues 84–404 (KKEKGVMVTL…AGNYKLPPGI (321 aa)). Residue Glu-295 is the Nucleophile of the active site.

The protein belongs to the glycosyltransferase 15 family. Interacts with SVP26.

It is found in the membrane. Possible glycosyltransferase that transfers an alpha-D-mannosyl residue from GDP-mannose into lipid-linked oligosaccharide, forming an alpha-(1-&gt;2)-D-mannosyl-D-mannose linkage. The chain is Probable mannosyltransferase KTR3 (KTR3) from Saccharomyces cerevisiae (strain ATCC 204508 / S288c) (Baker's yeast).